The primary structure comprises 121 residues: Cell division protein FtsB (121 aa).

Over 1-6 (MRNWRW) the chain is Cytoplasmic. Residues 7–24 (LLLVLAVLLAWLQYRFWF) form a helical membrane-spanning segment. Residues 25-121 (GPGNSGEVMM…PEPVDPVDHP (97 aa)) lie on the Periplasmic side of the membrane. Residues 31–66 (EVMMLEAQVAHQTQDNEGLRQRNQALAAEVKDLKDG) are a coiled coil. The disordered stretch occupies residues 98 to 121 (APASAEASAPAQQAPEPVDPVDHP). Residues 99 to 113 (PASAEASAPAQQAPE) are compositionally biased toward low complexity.

It belongs to the FtsB family. As to quaternary structure, part of a complex composed of FtsB, FtsL and FtsQ.

Its subcellular location is the cell inner membrane. Essential cell division protein. May link together the upstream cell division proteins, which are predominantly cytoplasmic, with the downstream cell division proteins, which are predominantly periplasmic. The sequence is that of Cell division protein FtsB from Xanthomonas axonopodis pv. citri (strain 306).